Consider the following 163-residue polypeptide: Lipoprotein signal peptidase (163 aa).

4 helical membrane-spanning segments follow: residues 9–29, 42–62, 67–87, and 93–113; these read AWPWLWFSVLVILLDQLSKYL, ILPFLNFTLNYNTGAAFSFLG, WQIIFFAAISFVVSIFLILWL, and SEIMMSLGLSLIIGGALGNFI. Residues Asp-123 and Asp-141 contribute to the active site. Residues 137–157 form a helical membrane-spanning segment; the sequence is FNVADSAICVGVFLLIVHMLL.

It belongs to the peptidase A8 family.

The protein resides in the cell inner membrane. The catalysed reaction is Release of signal peptides from bacterial membrane prolipoproteins. Hydrolyzes -Xaa-Yaa-Zaa-|-(S,diacylglyceryl)Cys-, in which Xaa is hydrophobic (preferably Leu), and Yaa (Ala or Ser) and Zaa (Gly or Ala) have small, neutral side chains.. The protein operates within protein modification; lipoprotein biosynthesis (signal peptide cleavage). This protein specifically catalyzes the removal of signal peptides from prolipoproteins. The protein is Lipoprotein signal peptidase of Coxiella burnetii (strain RSA 331 / Henzerling II).